The primary structure comprises 962 residues: Putative primase C962R (962 aa).

The SF3 helicase domain occupies 607–775 (ELDARLWIMF…PDPNNSYEKK (169 aa)). 636 to 643 (GGGCNGKT) lines the ATP pocket.

Belongs to the asfivirus helicase C962R family.

The polypeptide is Putative primase C962R (African swine fever virus (isolate Warthog/Namibia/Wart80/1980) (ASFV)).